The primary structure comprises 505 residues: Deoxyguanosinetriphosphate triphosphohydrolase (505 aa).

One can recognise an HD domain in the interval 66–273; sequence RLTHSMEVQQ…MEAADDISYC (208 aa).

It belongs to the dGTPase family. Type 1 subfamily. Homotetramer. The cofactor is Mg(2+).

The catalysed reaction is dGTP + H2O = 2'-deoxyguanosine + triphosphate + H(+). Functionally, dGTPase preferentially hydrolyzes dGTP over the other canonical NTPs. This is Deoxyguanosinetriphosphate triphosphohydrolase from Shigella boydii serotype 18 (strain CDC 3083-94 / BS512).